Here is a 342-residue protein sequence, read N- to C-terminus: MSEVIKSVPPGSQNTSQWIISKDQLVFTPSALDGIPLDQEEIQRSKGCNFIINVGLRLKLPQTALATANIYFHRFYLRFSLKNYHYYEVAATCIFLATKVEDSVRKLRDIVINCAKVAQKNSNVLVDEQTKEYWRWRDVILYTEEVLLEALCFDFTVEHPYPYVLSFIKKFVADDKNVTKVAWTYINDSTRSIACLLYSPKTIAAAAFQFALEKNEINLSTTTDGLPVWMEESQVSYEDVKGVLTLIDSLYKKINPSKQALPIDQKNGSHASSVAPGTPSSLASVSTQATPQHQNSSGRTDSFHSLNTETPSKSTVDDQILSTAAQPKKSSDTDKEMETEAS.

The disordered stretch occupies residues 261–342 (LPIDQKNGSH…TDKEMETEAS (82 aa)). Over residues 278-314 (TPSSLASVSTQATPQHQNSSGRTDSFHSLNTETPSKS) the composition is skewed to polar residues. Phosphothreonine is present on Thr300. Residue Ser302 is modified to Phosphoserine. Positions 329–342 (KSSDTDKEMETEAS) are enriched in basic and acidic residues.

Belongs to the cyclin family. Cyclin C subfamily. As to quaternary structure, interacts with cdc2 protein kinase and with the N-terminal domain of cdk9.

It is found in the nucleus. Its function is as follows. Essential for progression through the whole cell cycle. This Schizosaccharomyces pombe (strain 972 / ATCC 24843) (Fission yeast) protein is Cyclin pch1 (pch1).